The following is a 176-amino-acid chain: Shikimate kinase (176 aa).

Glycine 12 to threonine 17 lines the ATP pocket. Serine 16 contacts Mg(2+). Residues aspartate 34, arginine 58, and glycine 80 each contribute to the substrate site. Residue arginine 117 participates in ATP binding. Substrate is bound at residue arginine 136. An ATP-binding site is contributed by arginine 153.

The protein belongs to the shikimate kinase family. As to quaternary structure, monomer. It depends on Mg(2+) as a cofactor.

Its subcellular location is the cytoplasm. It catalyses the reaction shikimate + ATP = 3-phosphoshikimate + ADP + H(+). It participates in metabolic intermediate biosynthesis; chorismate biosynthesis; chorismate from D-erythrose 4-phosphate and phosphoenolpyruvate: step 5/7. Its function is as follows. Catalyzes the specific phosphorylation of the 3-hydroxyl group of shikimic acid using ATP as a cosubstrate. The chain is Shikimate kinase from Mycobacterium bovis (strain ATCC BAA-935 / AF2122/97).